The following is a 661-amino-acid chain: UvrABC system protein B (661 aa).

In terms of domain architecture, Helicase ATP-binding spans 25–178; sequence EGILKGEKFQ…DEVIRELIRM (154 aa). 38–45 is an ATP binding site; it reads GVTGSGKT. The Beta-hairpin signature appears at 91-114; it reads YYDYYQPEAYIPETDTYIEKDSSI. One can recognise a Helicase C-terminal domain in the interval 429–591; it reads QIDHLIGEIR…IVPQTVRKGI (163 aa). The 36-residue stretch at 625-660 folds into the UVR domain; it reads EEYIKELEQQMKRFAIELEFEKAAKIRDKIFELKKL.

Belongs to the UvrB family. In terms of assembly, forms a heterotetramer with UvrA during the search for lesions. Interacts with UvrC in an incision complex.

The protein resides in the cytoplasm. In terms of biological role, the UvrABC repair system catalyzes the recognition and processing of DNA lesions. A damage recognition complex composed of 2 UvrA and 2 UvrB subunits scans DNA for abnormalities. Upon binding of the UvrA(2)B(2) complex to a putative damaged site, the DNA wraps around one UvrB monomer. DNA wrap is dependent on ATP binding by UvrB and probably causes local melting of the DNA helix, facilitating insertion of UvrB beta-hairpin between the DNA strands. Then UvrB probes one DNA strand for the presence of a lesion. If a lesion is found the UvrA subunits dissociate and the UvrB-DNA preincision complex is formed. This complex is subsequently bound by UvrC and the second UvrB is released. If no lesion is found, the DNA wraps around the other UvrB subunit that will check the other stand for damage. In Caldicellulosiruptor saccharolyticus (strain ATCC 43494 / DSM 8903 / Tp8T 6331), this protein is UvrABC system protein B.